A 409-amino-acid polypeptide reads, in one-letter code: Probable plastid-lipid-associated protein 12, chloroplastic (409 aa).

The N-terminal 55 residues, 1 to 55 (MVAVRFYAVEMSLPCLCPCPSSPISLSLCSPRFNLLNTTSRRLGLSRNCRTLRIS), are a transit peptide targeting the chloroplast.

Belongs to the PAP/fibrillin family.

The protein localises to the plastid. Its subcellular location is the chloroplast thylakoid. The chain is Probable plastid-lipid-associated protein 12, chloroplastic (PAP12) from Arabidopsis thaliana (Mouse-ear cress).